Reading from the N-terminus, the 85-residue chain is Large ribosomal subunit protein bL27 (85 aa).

The disordered stretch occupies residues 1 to 21 (MAHKKAGGSSRNGRDSEGRRL).

Belongs to the bacterial ribosomal protein bL27 family.

This is Large ribosomal subunit protein bL27 from Rhodospirillum rubrum (strain ATCC 11170 / ATH 1.1.1 / DSM 467 / LMG 4362 / NCIMB 8255 / S1).